A 345-amino-acid polypeptide reads, in one-letter code: MAPLLNTGLVILPLIVSTLLGPMPAFAQNETCATKGKPAGKVLQGYWENWDGAKNGVHPPFGWTPIQDAQIRQHGYNVISAAFPVILPNGTALWEDGMDANVKVATPAEMCQAKAAGATIVMSIGGATAAIDLSSSSVADKFVSTIVPILKRYNFDGVDIDIEAGLSGSGTIGTLSTSQANLVRIIDGILAQMPSNFGLTMAPETAYVTGGSVTYGAIWGAYLPIIKKYADNGRLWWLNMQYYNGDMYGCSGDSYKAGTVEGFVAQTDCLNKGLVIQGTTIRVPYDKQVPGLPAQSGAGGGYMSPSLVGQAWDHYNGSLKGLMTWSINWDGSKGWTFGDNVKGRL.

A signal peptide spans 1–27 (MAPLLNTGLVILPLIVSTLLGPMPAFA). 2 N-linked (GlcNAc...) asparagine glycosylation sites follow: N29 and N89. The 305-residue stretch at 41 to 345 (KVLQGYWENW…TFGDNVKGRL (305 aa)) folds into the GH18 domain. E163 (proton donor) is an active-site residue. N316 carries N-linked (GlcNAc...) asparagine glycosylation.

This sequence belongs to the glycosyl hydrolase 18 family. Chitinase class V subfamily.

The protein resides in the secreted. The enzyme catalyses Random endo-hydrolysis of N-acetyl-beta-D-glucosaminide (1-&gt;4)-beta-linkages in chitin and chitodextrins.. Its function is as follows. Secreted chitinase involved in the degradation of chitin, a component of the cell walls of fungi and exoskeletal elements of some animals (including worms and arthropods). Participates in the infection process and directly acts in the penetration process of the host cuticle. This Metarhizium robertsii (strain ARSEF 23 / ATCC MYA-3075) (Metarhizium anisopliae (strain ARSEF 23)) protein is Endochitinase 4 (chi4).